The chain runs to 336 residues: Nuclear envelope-associated protein 1 (336 aa).

Residues 125–261 (CSMLKQQLDD…RRTDQDLKKK (137 aa)) are a coiled coil. The short motif at 240-261 (KTKELESQLEKQRRTDQDLKKK) is the Bipartite nuclear localization signal element. A helical transmembrane segment spans residues 313-330 (FWDNSGFKIVVSMSMLML).

In terms of assembly, forms heteromers with NEAP2 and NEAP3. Interacts with SUN1; SUN2 and bZIP18.

It localises to the nucleus inner membrane. The protein resides in the nucleus. The protein localises to the nucleoplasm. In Arabidopsis thaliana (Mouse-ear cress), this protein is Nuclear envelope-associated protein 1.